We begin with the raw amino-acid sequence, 160 residues long: SsrA-binding protein (160 aa).

This sequence belongs to the SmpB family.

Its subcellular location is the cytoplasm. Functionally, required for rescue of stalled ribosomes mediated by trans-translation. Binds to transfer-messenger RNA (tmRNA), required for stable association of tmRNA with ribosomes. tmRNA and SmpB together mimic tRNA shape, replacing the anticodon stem-loop with SmpB. tmRNA is encoded by the ssrA gene; the 2 termini fold to resemble tRNA(Ala) and it encodes a 'tag peptide', a short internal open reading frame. During trans-translation Ala-aminoacylated tmRNA acts like a tRNA, entering the A-site of stalled ribosomes, displacing the stalled mRNA. The ribosome then switches to translate the ORF on the tmRNA; the nascent peptide is terminated with the 'tag peptide' encoded by the tmRNA and targeted for degradation. The ribosome is freed to recommence translation, which seems to be the essential function of trans-translation. The chain is SsrA-binding protein from Yersinia enterocolitica serotype O:8 / biotype 1B (strain NCTC 13174 / 8081).